The chain runs to 550 residues: Aldehyde dehydrogenase family 3 member I1, chloroplastic (550 aa).

The N-terminal 59 residues, 1-59, are a transit peptide targeting the chloroplast; that stretch reads MTKLLEINHIQTLCFAKGFSPARLNVATSPFRISRRGGGGYCSNACIPYRLKFTCYATL. Position 259–264 (259–264) interacts with NAD(+); sequence GGARVA. Glutamate 281 serves as the catalytic Proton acceptor. Cysteine 316 functions as the Nucleophile in the catalytic mechanism.

Belongs to the aldehyde dehydrogenase family. Homodimer and homomultimer.

It localises to the plastid. The protein resides in the chloroplast. The catalysed reaction is an aldehyde + NAD(+) + H2O = a carboxylate + NADH + 2 H(+). Thiol-based regulation. Inactivation after dimerization under oxidizing conditions. Functionally, involved in oxidative stress tolerance by detoxifying reactive aldehydes derived from lipid peroxidation. Medium- to long-chain saturated aldehydes are preferred substrates, while the short-chain aldehyde propanal is a weak substrate. Can use both NAD(+) and NADP(+), but the coenzyme preference is substrate dependent. The protein is Aldehyde dehydrogenase family 3 member I1, chloroplastic (ALDH3I1) of Arabidopsis thaliana (Mouse-ear cress).